The primary structure comprises 190 residues: dCTP deaminase, dUMP-forming (190 aa).

DCTP-binding positions include 101-106 (KSSLGR), aspartate 119, 127-129 (TLE), glutamine 148, tyrosine 162, lysine 170, and glutamine 174. The active-site Proton donor/acceptor is the glutamate 129. The disordered stretch occupies residues 160 to 190 (HPYGSSRAGSKYQGQRGPTPSRSCQNFIRST). Polar residues predominate over residues 171 to 190 (YQGQRGPTPSRSCQNFIRST).

The protein belongs to the dCTP deaminase family. Homotrimer.

The enzyme catalyses dCTP + 2 H2O = dUMP + NH4(+) + diphosphate. It participates in pyrimidine metabolism; dUMP biosynthesis; dUMP from dCTP: step 1/1. Functionally, bifunctional enzyme that catalyzes both the deamination of dCTP to dUTP and the hydrolysis of dUTP to dUMP without releasing the toxic dUTP intermediate. In Mycobacterium bovis (strain ATCC BAA-935 / AF2122/97), this protein is dCTP deaminase, dUMP-forming.